We begin with the raw amino-acid sequence, 36 residues long: uncharacterized protein (36 aa).

This is an uncharacterized protein from Archaeoglobus fulgidus (strain ATCC 49558 / DSM 4304 / JCM 9628 / NBRC 100126 / VC-16).